We begin with the raw amino-acid sequence, 384 residues long: Deoxyguanosinetriphosphate triphosphohydrolase-like protein (384 aa).

The HD domain occupies 63 to 199 (RLTHSLEVAT…ASLADDISYI (137 aa)).

The protein belongs to the dGTPase family. Type 2 subfamily.

This Rickettsia typhi (strain ATCC VR-144 / Wilmington) protein is Deoxyguanosinetriphosphate triphosphohydrolase-like protein.